Reading from the N-terminus, the 156-residue chain is ATP synthase subunit b (156 aa).

Residues 11–31 form a helical membrane-spanning segment; it reads AIAFAVFVWFCMKYVWPPLLA.

The protein belongs to the ATPase B chain family. As to quaternary structure, F-type ATPases have 2 components, F(1) - the catalytic core - and F(0) - the membrane proton channel. F(1) has five subunits: alpha(3), beta(3), gamma(1), delta(1), epsilon(1). F(0) has three main subunits: a(1), b(2) and c(10-14). The alpha and beta chains form an alternating ring which encloses part of the gamma chain. F(1) is attached to F(0) by a central stalk formed by the gamma and epsilon chains, while a peripheral stalk is formed by the delta and b chains.

Its subcellular location is the cell inner membrane. F(1)F(0) ATP synthase produces ATP from ADP in the presence of a proton or sodium gradient. F-type ATPases consist of two structural domains, F(1) containing the extramembraneous catalytic core and F(0) containing the membrane proton channel, linked together by a central stalk and a peripheral stalk. During catalysis, ATP synthesis in the catalytic domain of F(1) is coupled via a rotary mechanism of the central stalk subunits to proton translocation. Its function is as follows. Component of the F(0) channel, it forms part of the peripheral stalk, linking F(1) to F(0). This Psychromonas ingrahamii (strain DSM 17664 / CCUG 51855 / 37) protein is ATP synthase subunit b.